The sequence spans 433 residues: Inositol hexakisphosphate kinase 1 (433 aa).

Positions 100 to 160 (ETVEQDDTPE…SPKVELHSHS (61 aa)) are disordered. A compositionally biased stretch (basic residues) spans 113–123 (PRRKHSRRSLH). A compositionally biased stretch (polar residues) spans 139 to 149 (SFETSESSQEA). The span at 150–160 (KSPKVELHSHS) shows a compositional bias: basic and acidic residues. Ser151 bears the Phosphoserine mark. 220–228 (PCVLDLKMG) contributes to the substrate binding site. The disordered stretch occupies residues 359-383 (EVPPPCGPSTSPSSTSLEAGPSSPP).

This sequence belongs to the inositol phosphokinase (IPK) family. In terms of tissue distribution, highly expressed in brain and testis. Detected at much lower levels in heart, kidney, liver, lung and spleen.

The protein localises to the cytoplasm. It is found in the nucleus. It carries out the reaction 1D-myo-inositol hexakisphosphate + ATP = 5-diphospho-1D-myo-inositol 1,2,3,4,6-pentakisphosphate + ADP. The catalysed reaction is 1-diphospho-1D-myo-inositol 2,3,4,5,6-pentakisphosphate + ATP + H(+) = 1,5-bis(diphospho)-1D-myo-inositol 2,3,4,6-tetrakisphosphate + ADP. Its function is as follows. Converts inositol hexakisphosphate (InsP6) to diphosphoinositol pentakisphosphate (InsP7/PP-InsP5). Converts 1,3,4,5,6-pentakisphosphate (InsP5) to PP-InsP4. This is Inositol hexakisphosphate kinase 1 (Ip6k1) from Mus musculus (Mouse).